We begin with the raw amino-acid sequence, 214 residues long: C-type lectin domain family 4 member E (214 aa).

Residues 1–22 (MNSTKSPASHHTERGCFKNSQV) are Cytoplasmic-facing. The helical; Signal-anchor for type II membrane protein transmembrane segment at 23–45 (LSWTIAGASILFLSGCFITRCVV) threads the bilayer. The Extracellular segment spans residues 46–214 (TYRSSQISGQ…CEMPEISPLD (169 aa)). C80 and C91 form a disulfide bridge. The 120-residue stretch at 87–206 (YQSSCYFFST…CFYSMPWICE (120 aa)) folds into the C-type lectin domain. N107 is a glycosylation site (N-linked (GlcNAc...) asparagine). Cystine bridges form between C108–C205 and C179–C197. Positions 117, 123, 169, 171, 193, 194, and 206 each coordinate Ca(2+). The Confers specificity for glucose/mannose-type carbohydrates motif lies at 169–171 (EPN).

Monomer and homodimer. Interacts with signaling adapter Fc receptor gamma chain/FCER1G to form a functional complex; the interaction is direct. Alternatively, acts as a bridge for interaction between CLEC4D and FCER1G. A heterodimer of CLEC4E and CLEC4D associates with FCER1G to form a functional complex. Interacts with SAP130 nuclear protein that is released from necrotic cells; the interaction is direct. Highly expressed in macrophages in response to stimulation with bacterial glycolipids and pro-inflammatory cytokines. Expressed in dendritic cells (at protein level) in response to stimulation with mycobacterial trehalose 6,6'-dimycolate (TDM).

It localises to the cell membrane. Its subcellular location is the cell projection. It is found in the phagocytic cup. Functionally, calcium-dependent lectin that acts as a pattern recognition receptor (PRR) of the innate immune system: recognizes damage-associated molecular patterns (DAMPs) of abnormal self and pathogen-associated molecular patterns (PAMPs) of bacteria and fungi. The PAMPs notably include mycobacterial trehalose 6,6'-dimycolate (TDM), a cell wall glycolipid with potent adjuvant immunomodulatory functions. Interacts with signaling adapter Fc receptor gamma chain/FCER1G to form a functional complex in myeloid cells. Binding of mycobacterial trehalose 6,6'-dimycolate (TDM) to this receptor complex leads to phosphorylation of the immunoreceptor tyrosine-based activation motif (ITAM) of FCER1G, triggering activation of SYK, CARD9 and NF-kappa-B, consequently driving maturation of antigen-presenting cells and shaping antigen-specific priming of T-cells toward effector T-helper 1 (Th1) and T-helper 17 (Th17) cell subtypes. Also recognizes alpha-mannose residues on pathogenic fungi of the genus Malassezia and mediates macrophage activation. Through recognition of DAMPs released upon nonhomeostatic cell death, enables immune sensing of damaged self and promotes inflammatory cell infiltration into the damaged tissue. This Mus musculus (Mouse) protein is C-type lectin domain family 4 member E.